The following is a 320-amino-acid chain: Cytochrome f (320 aa).

The first 36 residues, 1 to 36, serve as a signal peptide directing secretion; it reads MKLNSLINLIQKSIYSCTLLLTILNIICIAPNSSNA. Positions 37, 57, 60, and 61 each coordinate heme. Residues 286 to 305 traverse the membrane as a helical segment; sequence IKGMIAFFFVSVLAQIFFVL.

It belongs to the cytochrome f family. In terms of assembly, the 4 large subunits of the cytochrome b6-f complex are cytochrome b6, subunit IV (17 kDa polypeptide, petD), cytochrome f and the Rieske protein, while the 4 small subunits are PetG, PetL, PetM and PetN. The complex functions as a dimer. Heme serves as cofactor.

Its subcellular location is the plastid. The protein resides in the chloroplast thylakoid membrane. In terms of biological role, component of the cytochrome b6-f complex, which mediates electron transfer between photosystem II (PSII) and photosystem I (PSI), cyclic electron flow around PSI, and state transitions. This Porphyra purpurea (Red seaweed) protein is Cytochrome f (petA).